We begin with the raw amino-acid sequence, 655 residues long: Probable replication factor A 73 kDa subunit (655 aa).

The segment at 195 to 217 is disordered; the sequence is NRAAAPEATRARAVPPPARRTAS. Positions 196–207 are enriched in low complexity; it reads RAAAPEATRARA. Positions 236-326 form a DNA-binding region, OB; sequence FKIHGMVSRK…TLRSDSIIEA (91 aa). The segment at 518-539 adopts a C4-type zinc-finger fold; the sequence is CASEGCQKKLVGENGDYRCEKC.

This sequence belongs to the replication factor A protein 1 family. As to quaternary structure, component of the heterotrimeric canonical replication protein A complex (RPA).

The protein resides in the nucleus. Its function is as follows. As part of the heterotrimeric replication protein A complex (RPA/RP-A), binds and stabilizes single-stranded DNA intermediates, that form during DNA replication or upon DNA stress. It prevents their reannealing and in parallel, recruits and activates different proteins and complexes involved in DNA metabolism. Thereby, it plays an essential role both in DNA replication and the cellular response to DNA damage. This Caenorhabditis elegans protein is Probable replication factor A 73 kDa subunit.